Here is a 37-residue protein sequence, read N- to C-terminus: Large ribosomal subunit protein bL36c (37 aa).

It belongs to the bacterial ribosomal protein bL36 family.

Its subcellular location is the plastid. The protein is Large ribosomal subunit protein bL36c (rpl36) of Euglena longa (Euglenophycean alga).